A 616-amino-acid chain; its full sequence is Probable Xaa-Pro aminopeptidase P (616 aa).

Residues D413, D424, E522, and E536 each coordinate Mn(2+).

This sequence belongs to the peptidase M24B family. It depends on Mn(2+) as a cofactor.

It catalyses the reaction Release of any N-terminal amino acid, including proline, that is linked to proline, even from a dipeptide or tripeptide.. Functionally, catalyzes the removal of a penultimate prolyl residue from the N-termini of peptides. In Paracoccidioides lutzii (strain ATCC MYA-826 / Pb01) (Paracoccidioides brasiliensis), this protein is Probable Xaa-Pro aminopeptidase P (AMPP).